The primary structure comprises 1310 residues: Clustered mitochondria protein homolog (1310 aa).

Positions 375–619 (DITRSQESYL…RVTPLDVVWQ (245 aa)) constitute a Clu domain. Residues 662–682 (KAQEDAANKEQPSETTESKEG) show a composition bias toward basic and acidic residues. Disordered regions lie at residues 662-692 (KAQE…EEAL) and 931-960 (VANG…SRAV). TPR repeat units lie at residues 1033–1066 (AKLY…TERT), 1075–1108 (ILAY…WKII), and 1117–1150 (ITTM…CESL). Disordered stretches follow at residues 1245-1266 (VQPQ…ANAS) and 1281-1310 (GGDA…KSSA).

This sequence belongs to the CLU family. As to quaternary structure, may associate with the eukaryotic translation initiation factor 3 (eIF-3) complex.

The protein resides in the cytoplasm. MRNA-binding protein involved in proper cytoplasmic distribution of mitochondria. The chain is Clustered mitochondria protein homolog from Aspergillus fumigatus (strain CBS 144.89 / FGSC A1163 / CEA10) (Neosartorya fumigata).